The sequence spans 202 residues: Putative transposon Tn552 DNA-invertase bin3 (202 aa).

A Resolvase/invertase-type recombinase catalytic domain is found at 1–143 (MIIGYARVSS…QGIQVAKEKG (143 aa)). The active-site O-(5'-phospho-DNA)-serine intermediate is the Ser-9.

The protein belongs to the site-specific recombinase resolvase family.

Functionally, potential DNA invertase. The chain is Putative transposon Tn552 DNA-invertase bin3 (bin3) from Staphylococcus aureus.